A 313-amino-acid chain; its full sequence is Ribosomal RNA small subunit methyltransferase H (313 aa).

S-adenosyl-L-methionine is bound by residues 33–35, Asp-53, Phe-82, Asp-103, and Gln-110; that span reads AGH.

The protein belongs to the methyltransferase superfamily. RsmH family.

It is found in the cytoplasm. It carries out the reaction cytidine(1402) in 16S rRNA + S-adenosyl-L-methionine = N(4)-methylcytidine(1402) in 16S rRNA + S-adenosyl-L-homocysteine + H(+). Specifically methylates the N4 position of cytidine in position 1402 (C1402) of 16S rRNA. This Ruminiclostridium cellulolyticum (strain ATCC 35319 / DSM 5812 / JCM 6584 / H10) (Clostridium cellulolyticum) protein is Ribosomal RNA small subunit methyltransferase H.